A 310-amino-acid polypeptide reads, in one-letter code: AA9 family lytic polysaccharide monooxygenase A (310 aa).

Residues 1–21 form the signal peptide; the sequence is MPSTKVAALSAVLALASTVAG. The Cu(2+) site is built by histidine 22 and histidine 107. 2 cysteine pairs are disulfide-bonded: cysteine 77-cysteine 199 and cysteine 118-cysteine 122. Residues asparagine 121 and asparagine 159 are each glycosylated (N-linked (GlcNAc...) asparagine). Histidine 185 contributes to the O2 binding site. Tyrosine 196 contributes to the Cu(2+) binding site.

It belongs to the polysaccharide monooxygenase AA9 family. Cu(2+) serves as cofactor.

It localises to the secreted. The catalysed reaction is [(1-&gt;4)-beta-D-glucosyl]n+m + reduced acceptor + O2 = 4-dehydro-beta-D-glucosyl-[(1-&gt;4)-beta-D-glucosyl]n-1 + [(1-&gt;4)-beta-D-glucosyl]m + acceptor + H2O.. In terms of biological role, lytic polysaccharide monooxygenase (LPMO) that depolymerizes crystalline and amorphous polysaccharides via the oxidation of scissile alpha- or beta-(1-4)-glycosidic bonds, yielding C1, C4 as well as C6 oxidation products. Catalysis by LPMOs requires the reduction of the active-site copper from Cu(II) to Cu(I) by a reducing agent and H(2)O(2) or O(2) as a cosubstrate. Active on cellulose, but not on xylan, starch, or chitin. This is AA9 family lytic polysaccharide monooxygenase A from Talaromyces pinophilus (Penicillium pinophilum).